A 560-amino-acid chain; its full sequence is Platelet glycoprotein V (560 aa).

A signal peptide spans 1–16 (MLRGTLLCAVLGLLRA). Residues 17-50 (QPFPCPPACKCVFRDAAQCSGGDVARISALGLPT) form the LRRNT domain. The Extracellular portion of the chain corresponds to 17 to 523 (QPFPCPPACK…KGQDHSPFWG (507 aa)). A glycan (N-linked (GlcNAc...) asparagine) is linked at N51. LRR repeat units follow at residues 75-96 (VLQR…TFSD), 99-120 (KLKT…LLDK), 123-144 (LLEQ…MFQK), 147-168 (NLQE…LFTN), 171-193 (NLKL…LGAQ), 195-216 (KLER…LLNS), 219-240 (ALTE…AFDR), 243-264 (NLSS…LFLH), 267-288 (NLTL…LFGE), 291-312 (GLQE…AFRN), 340-361 (ELQV…LLRG), 364-385 (KLRQ…LFRN), and 388-409 (SLES…VFGA). Residue N181 is glycosylated (N-linked (GlcNAc...) (complex) asparagine). A glycan (N-linked (GlcNAc...) (complex) asparagine) is linked at N243. N-linked (GlcNAc...) asparagine glycans are attached at residues N267, N298, and N312. N385 carries an N-linked (GlcNAc...) asparagine glycan. Residues 421 to 474 (NSWRCDCGLGPFLGWLRQHLGLVGGEEPPRCAGPGAHAGLPLWALPGGDAECPG) enclose the LRRCT domain. Residues 469 to 498 (DAECPGPRGPPPRPAADSSSEAPVHPALAP) are disordered. N499 carries N-linked (GlcNAc...) asparagine glycosylation. Residues 524-544 (FYFLLLAVQAMITVIIVFAMI) form a helical membrane-spanning segment. Residues 545–560 (KIGQLFRKLIRERALG) are Cytoplasmic-facing.

In terms of processing, the N-terminus is blocked. Platelets and megakaryocytes.

Its subcellular location is the membrane. Its function is as follows. The GPIb-V-IX complex functions as the vWF receptor and mediates vWF-dependent platelet adhesion to blood vessels. The adhesion of platelets to injured vascular surfaces in the arterial circulation is a critical initiating event in hemostasis. The protein is Platelet glycoprotein V (GP5) of Homo sapiens (Human).